Here is a 186-residue protein sequence, read N- to C-terminus: ATP-dependent protease subunit HslV (186 aa).

Thr-14 is an active-site residue. The Na(+) site is built by Ala-168, Cys-171, and Thr-174.

Belongs to the peptidase T1B family. HslV subfamily. A double ring-shaped homohexamer of HslV is capped on each side by a ring-shaped HslU homohexamer. The assembly of the HslU/HslV complex is dependent on binding of ATP.

The protein localises to the cytoplasm. The catalysed reaction is ATP-dependent cleavage of peptide bonds with broad specificity.. Allosterically activated by HslU binding. Functionally, protease subunit of a proteasome-like degradation complex believed to be a general protein degrading machinery. This chain is ATP-dependent protease subunit HslV, found in Bradyrhizobium sp. (strain BTAi1 / ATCC BAA-1182).